A 698-amino-acid polypeptide reads, in one-letter code: Probable threonine--tRNA ligase 2, cytoplasmic (698 aa).

Residues G38 to E100 form the TGS domain. The disordered stretch occupies residues N541–N560.

This sequence belongs to the class-II aminoacyl-tRNA synthetase family.

The protein localises to the cytoplasm. It catalyses the reaction tRNA(Thr) + L-threonine + ATP = L-threonyl-tRNA(Thr) + AMP + diphosphate + H(+). This Dictyostelium discoideum (Social amoeba) protein is Probable threonine--tRNA ligase 2, cytoplasmic (thrS2).